We begin with the raw amino-acid sequence, 5061 residues long: MTRKRKSGKKGKPLAQKKEAQKRGGSTSSSTTQKEGAQKGDGSSSSSTTQKDGAQKRDDSTSSSSTAQKEEGQKSDGSTSSSTTNKEGAQKRDGSTSSRLQKKGPQKRKGSTSSSRAHSRSRSKSKQTSYPSQARSRSHGQHNISTTESGPLSKEAQTQTSASLLVDKDTQTETVGQASQQTQTEINGNTETAEVSQPPQLSHEDVEMEGTVQPRTKGSESDGEKEESVKRKKRKLSEIGEPAKETEDSTKLSHECEEKVGDNQKNEDTNKHYGGDSLKDLKSVTEEPKSYAAAAATGKTGKVSKEQTNQIEANQDSTMESKSTQRKPSPVRAPAGPPMLTFYIYAVLDKRFRFNEQYDSLFLDYGNGNIKLQMKHFNIGKDGYLIEATFSVEDSAVRGGTIQYKYVVQQRQNQKSEIAVRYIEVPSYTTEKEFHLYEGYISCSSTVSITEWMMSLFHSEQKAVYKGWETSAHVLLDRIFLKWHPSNEESNMTFVQHLRSYKNAFESGFVEFPGNYTPFPIKVSELISAKLRMILKKESEALRTSESLDGVKSEALSVALSVFKVCCGCDVDLSLKDWGKLCQVVSECMGSFGEIQTTQTAPFINTVTGLMNLCAKKLITEVVLLVPVLHLLRNSEVNEAGPGSSMDEQRWTGLENISYQSFRERIRGLPDKRRMILKLIKDNLPMTKDNPKLLKSWLSLVAFEDVSEFVQLTGSFPELLIQSLMCRIIEAEKNTDANRTEKNLEVTGKVLNLLLKSIKKDRERIMKTEQLKLILQCCCNVHKSVCKTARLVPQYKVTVLSFQLLLKMAEIVYDGFFKGGEQMKQHQNEVLSKLNIIQEDFRKWRVELLLKPLMQTTGFTYPREMELWNDLYGIESSIPGVTERWKGFLDHDLRRRISQISDTDKIVVYVLVTSAKAVENSHANIQSCLKELCEAAIKNQCQSKKEGTLLCHLFSKTISWPVLSSIIVESAACFGEDHKGRLLDPQSAINFFLSQDKWNEWKLEDGASQLIAESQSFLGRLIQTLCQGSIPLGHLKTIFKYKTQFQKLYNQYKNNNKEMNVSISVSDLLSQREDDLKAFEQQKGYMTNLINMLGKISDVINVPELSSLEEIAKTNVQEVALDKLVEVETYFSKDDLKKNNTRRVLFYSDDQQVQDMAREMHDVNSSNLILSFWQEKAKDYFMAGPELLSLDLTEIYEDIWTPCLTKFLNFGNRIAVGQACFKEVEEALVGCGETGEGDRLKKEFMLMATMLDGHNENWPEQRLKQIREYRCLYDAAESAEVILKLKDRLGLQGDFSHIHSLTLVRDDSFKQNTLGSLSEDLIKARQKLADVERRHTACLEAFLKSDTLIKWIKAEIPSLKELKVFMELATISAGENDADIDRLASFETAVMGYAPLLYSLPQNVGFEEFFDYAKQVLDTLNKDEKLGDKLVDSNRWLDWLKGLRETHGSVEQSSLSLASAINTGGVYHVGWPDDFNGKTGLDNIFYVKVTKNNEEKTYRLNELLELQNKLMLMSSKGEKGKEQVIKFTQVFEGIQRMGRILLQLHRSGNMLFRNWAAEITCNHQNQPCIQVKFPLLSKCIVYQGEVEEELQKLSRSLEDFHKDWCNHLTKMRSQYYPLNHYSSEQIVYLCEWINSINIKKKPVPQQVWHLLTPIKPDCMLNDIKEAFEIATEPQSILQEDTAEELGPNSDFDLPLSFSLLDVSTECLEDLWKQFKENMSGFLTHHVDVETLGRFLSNLSNMNQLHIKRKIPSFLQEGRPNLVQCPAAELMSTTLSFYMESPENPLPTTDEVLMCQEETTEEEVEIFLRRCLGGAASNHKKIYTLVNPGSMSYDVSVALVEYFETQEVCAGPYYRLVMVCPVNQDRYIPSFFSNYKVQTGITISAERSQKYIRHHFKISYELATHSSVYPERLSVWMIASKRPAVGKSLYVRRLFEKFKGEFPRATLLTIRLIDPYIDMDGFVQTLSERLAPLRQQDPVLLHIDVAAVCHGLEEFLFKLLILECISDSKGTIWRRNKAHLVVIETLQRGHKTQTKMEPSHGFLNTLPTIFCRPPKDIKEIMKTNESFRSLDPLMDKEEFESEDIQRPYQYLRRFNRSMNLDRFTYQAHSVEGDPVDCLHHLLSNYGLKDPSWAELKHFTWFLNLQLKDCEKSLFCDSDFCGETLSGFKDFIVKFMIHMARDFASPSIDISDQSPSFFSKNEDEEEILSFRKRWENESHPYIFFNADHVSMSFLGFHVKQNGTILNAVDSKSGKVLMRNVMTQELFSDIQRQMINLSKDFDDLTREDKLQKMSFVVGAEKGCEKGKFDPDPTYELTTDNVMKMLAIHMRFRCEIPVIIMGETGCGKTRLVRFLCDLQREGRDVENMKLVKVHGGTTSETIYKKVREAEELAQKNRQKYKLDTVLFFDEANTTEAIFAIKEVLCDKTVKGYPLKKNSGLKIIAACNPYRRHTTKMVDRLERAGLGYRVKAEETEDRLGKVPMRQLVYRVHPLPPSMVPLVWDFGQLSDSTELSYIRQIVKKKMRDHRLPLSCQNVITNVLAASQKYMRNQADECSFVSLRDVERSMGVLLWFYNHRDIFFPSQDFPRFENVQMVLKCLVLAVGVCYYPSLENKRPYLATISKCFPDQFNSEESLEQEIASCQDFLLKNIQTRETIAKNMALKENVFLMVVCIELRIPLFLVGKPGSSKSLAKTVIADAMQRQASHCDLFKKLKEVHMVSFQCSPHSSPEGIIGTFRNCARFQKDKNLDEYVSVVVLDEIGLAEDSPQMPLKTLHPLLEDGCIDSDNPESYMKVGFVGISNWALDPAKMNRGIFVSRWDPSEKDLVETAEGICSSSQPVLLKIKHLLSKLAKCFLSICKTDSEQFFGLRDYYGLIKMLFDTVKCSDQEPSDKELAEAVLRNFSGQRDGFDPLDYFKDIFQNIQNVQRPNTLNMIEQNLDHHIDKECRYLLLLTTNNAALYIIQHHIFSKENYTQKCPEIVFGSGFPKDQEYAQICRNVSRIKACMETGRTVILLNLLNLYESLYDALNQYYVYFSGQQYVDLGLGSHRVKCRVHRDFRLVVVEDQEKVYKKFPVPLKNRLEKHKVDRSTDLAPWQHRVLEKLKKWAREFSKIQHSDSSEANFSVTDAFVGFHGDACASALLQALKKIDKLHHNKEENREESEAHHIDREFTEFQEKVNKFPDEAQEDDASMEVDKVQDAEIDEEMETLEDDSDLVKMVEGPVFVETRDKIESNKTMDEEEVYEIAKSFLLNCSTPDSVLRLKYSEFGNQETEELQKMYFHLQTHQSLRDLLNNHLNKTNQDKNRFLEVTTFSNLLTGADVRNLGPALGLSTERFLLLSLHQFDTEASFCNKIQSFLRESGPSVHILLIQMDMEESLCKNELIASAKYCTMNEILHLKSDECNIYTVFITKLSRIGEQCTSITGDKYIGFQGGVWLSAHIDDLRDSDDLCLNLKAFCGIPISQLISQTIESDVKESDEMNTNRQQSEKGDSVHLHSLSLLRSCTQKAVSLLRDTDEKTSRSMERMNILLGLLACDPGRTGARFQQVLLKRLVFALIQKEELIPNAKDWVYKVAKNHEALQECGTLRHTLWRYLQDFLTPVLARILEVIDRDCNLYQLYGEGLSEGLTQFWLDIFEDQQLLDLIPSQNTRAPDQEINVQCHLFVGEVEQPCAAPYSWLIKTYCQSLWEESEFVRSSEQDIKARIQQFVSAVSGSRLGSYIQKLSDVENVELGQRYLTDYVLLAFKVNSEDEHWVLQSAVLGCVFTLQTMMSVSPELSPSWIHAAAQIYNPRMDTLSHVLQLNPQLVSLIQQERPKRESPDMCEDILAVGICVEETKLLPVTSLTECLTFLQRVEQLQPCIERVLSPDYSALCSPGCLKYLETIQSVWQGILLVAVFIEKVVIKMKKGDERIIALTLKHCSQLHGLVEGSPDFRSKDNLQQIIRILNDYHEESISSELRYGVKCRVCLMELSEPFALPCEHVFCRSCLRRSMEREEAQHCPVCREPLSNNYQPTVSTTLNYSFALKQHKEIIKCCNTFFLEVVSRFCLTDDQDPPDDLVELLFSLLISAQGDVYKTRELTPFLECVDQSPVVRSVLPKLLMQYSLKQVKKHIQSYLEDLENKLLDKEDRTELYRLFVNCFQDTLLCSDSNGDHKHLRENTNFLSRLARKQTPSRQNDPAEFLMSMARLRMCLDSAAYILSKAICQKNNFVEAEFKFMEQVKAVCDYCDNDWYRVYLLRALNRQAGMDFLQALINSTDYEWIFPAEMMRLHRLIPAEVDRFLCCGQSYRALRDGVGESTQVGTTDGLKEALQASVGSSPLKNALLTLAVFRQVTCHFMSPERTLHPQEQQISILEKVIRDNMSGHAREFCTALLSNHIGGPGSNLRLGTGVPAQRRPVLELLVHACTVFYSGNRLISPLFNIASQPQNMTGAFLPTMPDDHTSEAKQWLSEKKLKMYFCSNSHACFVGECGRPMAKSKCATCGVEIGGEGHIPVPGFTEAYGDYDRTRPGHILGQARTRSEAPNRKLTLAQSCVLRLCLHLAMLQGLIHYQQGIRNMIHPEVSDVYQFLWQHLEKDMEVLGKTLTLNIDDSAIVIHLIFSRFLQTTPVANVDLSTRKSREQWEITVCKTAISPVLQNLDRELNNAQDLIAADNRLSNSPLVKVLRGDPQRMLQLPANCPTEHSAFWSPSSVLAVESISQQIDQAQAPLLTLFVQKVHYIRQLDCLPALAALLSDLIKVLPPGSETQNHTIASLLHCIPAGHQKKLMSERVEIYMKVWNQLRMEISSNASLGLDSTHCEKDITSESSGQFLFPSRKGAGSCLHAVIDVLSETHNSLVREARKLCQQTDSDYKVPLAVLSKSQLALCHPEREFLPLVLANCHYTLEKGQQTVSSYDHQGIERELSRRFFAGKPRIQTDTEKYLRRHHQNFTEVLNEVRAKIPQEMFWNPKQIHQAFSTNYHSTNRHKGLSRFYPDQPLSITTVPDLVIPRRPVGFQTQERHTLTPPGSHLTALNSLPAFSFCAPPISIRSTMELHLEEKDITSFPGLDSLPEELTWAKAAEIWRLAVQFKH.

Positions 1 to 12 are enriched in basic residues; the sequence is MTRKRKSGKKGK. Residues 1-334 are disordered; the sequence is MTRKRKSGKK…QRKPSPVRAP (334 aa). Polar residues-rich tracts occupy residues 24–52 and 75–87; these read GGSTSSSTTQKEGAQKGDGSSSSSTTQKD and SDGSTSSSTTNKE. Positions 100–110 are enriched in basic residues; it reads LQKKGPQKRKG. 2 stretches are compositionally biased toward polar residues: residues 127–163 and 172–200; these read QTSYPSQARSRSHGQHNISTTESGPLSKEAQTQTSAS and TETVGQASQQTQTEINGNTETAEVSQPPQ. Composition is skewed to basic and acidic residues over residues 217–229 and 236–289; these read KGSESDGEKEESV and LSEI…EEPK. The span at 292–301 shows a compositional bias: low complexity; it reads AAAAATGKTG. Polar residues predominate over residues 306-322; sequence EQTNQIEANQDSTMESK. Residues 1923–1928, Glu2023, Asp2074, Lys2417, and Ser2492 contribute to the ATP site; that span reads AVGKSL. Residues Cys3957, Cys3960, Cys3972, His3974, Cys3977, Cys3980, Cys3993, Cys3996, Cys4451, and His4455 each contribute to the Zn(2+) site. Residues 3957–3997 form an RING-type zinc finger; the sequence is CRVCLMELSEPFALPCEHVFCRSCLRRSMEREEAQHCPVCR. Residues 4429 to 4501 form an RZ-type zinc finger; the sequence is MPDDHTSEAK…AYGDYDRTRP (73 aa). The Nucleophile; for E3 ubiquitin-lipopolysaccharide ligase activity role is filled by Cys4462. Zn(2+) contacts are provided by Cys4471 and Cys4474.

This sequence belongs to the AAA ATPase family.

It localises to the cytoplasm. Its subcellular location is the cytosol. The protein localises to the lipid droplet. The catalysed reaction is S-ubiquitinyl-[E2 ubiquitin-conjugating enzyme]-L-cysteine + [acceptor protein]-L-lysine = [E2 ubiquitin-conjugating enzyme]-L-cysteine + N(6)-ubiquitinyl-[acceptor protein]-L-lysine.. It carries out the reaction ATP + H2O = ADP + phosphate + H(+). It participates in protein modification; protein ubiquitination. Its function is as follows. Atypical E3 ubiquitin ligase that can catalyze ubiquitination of both proteins and lipids, and which is involved in various processes, such as lipid metabolism, angiogenesis and cell-autonomous immunity. Acts as a key immune sensor by catalyzing ubiquitination of the lipid A moiety of bacterial lipopolysaccharide (LPS) via its RZ-type zinc-finger: restricts the proliferation of cytosolic bacteria, such as Salmonella, by generating the bacterial ubiquitin coat through the ubiquitination of LPS. Ubiquitination of LPS triggers cell-autonomous immunity, such as antibacterial autophagy, leading to degradation of the microbial invader. Involved in lipid metabolism by regulating fat storage and lipid droplet formation; act by inhibiting the lipolytic process. Also regulates lipotoxicity by inhibiting desaturation of fatty acids. Also acts as an E3 ubiquitin-protein ligase via its RING-type zinc finger. Involved in the non-canonical Wnt signaling pathway in vascular development: acts by mediating ubiquitination and degradation of proteins downstream of rspo3, leading to inhibit the non-canonical Wnt signaling pathway and promoting vessel regression. Also has ATPase activity; ATPase activity is required for ubiquitination of LPS. This chain is E3 ubiquitin-protein ligase rnf213-beta (rnf213b), found in Danio rerio (Zebrafish).